Here is a 354-residue protein sequence, read N- to C-terminus: MAGNTFGELFRVTTWGESHGPGIGVVIDGCPPGLALDEAGVQKMLDRRKPGGGSIASTARKEADRAVILSGVFEGKTTGTPILIMAHNRDARSSAYTDIAGLFRPGHGDITYTAKYGIRDWRGGGRASARETFGRVAAGAVAAELLRLSGISVAAYTLELGGIRATTIDVGQVDQNMFGCPDSTVMAAMTDRVTQVKRRGDSVGGIVEVRADGVPAGLGEPVFDKLDADIAKALMSIGAVKGVEIGAGFEASGMTGSRSNDEITPQGFATNNAGGILAGISNGDRIVARAAVKPIPSIGITQQTVDTNGKPASISIKGRHDISAIPRINVVCEAMVCLVLADHLLRQKAISWTR.

Position 48 (R48) interacts with NADP(+). FMN is bound by residues 126–128 (RAS), A278, 293–297 (KPIPS), and R319.

This sequence belongs to the chorismate synthase family. Homotetramer. Requires FMNH2 as cofactor.

It catalyses the reaction 5-O-(1-carboxyvinyl)-3-phosphoshikimate = chorismate + phosphate. It participates in metabolic intermediate biosynthesis; chorismate biosynthesis; chorismate from D-erythrose 4-phosphate and phosphoenolpyruvate: step 7/7. Its function is as follows. Catalyzes the anti-1,4-elimination of the C-3 phosphate and the C-6 proR hydrogen from 5-enolpyruvylshikimate-3-phosphate (EPSP) to yield chorismate, which is the branch point compound that serves as the starting substrate for the three terminal pathways of aromatic amino acid biosynthesis. This reaction introduces a second double bond into the aromatic ring system. The protein is Chorismate synthase of Desulfosudis oleivorans (strain DSM 6200 / JCM 39069 / Hxd3) (Desulfococcus oleovorans).